The following is a 227-amino-acid chain: Calcium-binding protein 1 (227 aa).

The N-myristoyl glycine moiety is linked to residue glycine 2. Cysteine 4 carries the S-palmitoyl cysteine lipid modification. 4 EF-hand domains span residues 82–117 (EEIE…MGYM), 136–153 (GHVD…KLLA), 159–194 (IGVK…LLGH), and 196–227 (VGHR…MMSR). The Ca(2+) site is built by aspartate 95, aspartate 97, aspartate 99, tyrosine 101, and aspartate 106. 4 residues coordinate Ca(2+): aspartate 172, asparagine 174, aspartate 176, and glutamate 178. The residue at position 180 (serine 180) is a Phosphoserine. Ca(2+) is bound by residues glutamate 183, aspartate 209, asparagine 211, aspartate 213, arginine 215, and glutamate 220.

In terms of assembly, homodimer; when bound to calcium or magnesium. Interacts (via C-terminus) with ITPR1, ITPR2 and ITPR3. This binding is calcium dependent and the interaction correlates with calcium concentration. An additional calcium-independent interaction with the N-terminus of ITPR1 results in a decreased InsP(3) binding to the receptor. Interacts with CACNA1A (via C-terminal CDB motif) in the pre- and postsynaptic membranes. Interacts with CACNA1D and CACNA1C (via C-terminal C and IQ motifs). The binding to the C motif is calcium independent whereas the binding to IQ requires the presence of calcium and is mutually exclusive with calmodulin binding. Interacts with TRPC5 (via C-terminus). Interacts (via EF-hands 1 and 2) at microtubules with MAP1LC3B. Interacts with MYO1C. Interacts (via EF-hands 1 and 2) with NSMF (via the central NLS-containing motif region), the interaction occurs in a calcium dependent manner after synaptic NMDA receptor stimulation and prevents nuclear import of NSMF. Interacts with SPACA9 homolog. Post-translationally, phosphorylated. The phosphorylation regulates the activity. As to expression, expressed in the inner retina, specifically in amacrine cells and in cone OFF-bipolar cells (at protein level).

Its function is as follows. Modulates calcium-dependent activity of inositol 1,4,5-triphosphate receptors (ITPRs). Inhibits agonist-induced intracellular calcium signaling. Enhances inactivation and does not support calcium-dependent facilitation of voltage-dependent P/Q-type calcium channels. Causes calcium-dependent facilitation and inhibits inactivation of L-type calcium channels by binding to the same sites as calmodulin in the C-terminal domain of CACNA1C, but has an opposite effect on channel function. Suppresses the calcium-dependent inactivation of CACNA1D. Inhibits TRPC5 channels. Prevents NMDA receptor-induced cellular degeneration. Required for the normal transfer of light signals through the retina. The sequence is that of Calcium-binding protein 1 (Cabp1) from Mus musculus (Mouse).